The primary structure comprises 681 residues: Chaperone protein HtpG (681 aa).

Residues 1–326 (MQKGNIGVTT…SPDIPLNVSR (326 aa)) form an a; substrate-binding region. A b region spans residues 327-545 (SYLQSDSNVK…YMRRMKEMAN (219 aa)). The interval 546 to 681 (IQAGMSFYGE…NFVKRSIELI (136 aa)) is c. The interval 589–620 (IQTEMNSVSKRRNELKDSQKDKKEEDIPTAEK) is disordered. The segment covering 599–620 (RRNELKDSQKDKKEEDIPTAEK) has biased composition (basic and acidic residues).

This sequence belongs to the heat shock protein 90 family. Homodimer.

Its subcellular location is the cytoplasm. Molecular chaperone. Has ATPase activity. In Bacteroides thetaiotaomicron (strain ATCC 29148 / DSM 2079 / JCM 5827 / CCUG 10774 / NCTC 10582 / VPI-5482 / E50), this protein is Chaperone protein HtpG.